Here is a 429-residue protein sequence, read N- to C-terminus: Ribosomal RNA small subunit methyltransferase B (429 aa).

Residues 254-260 (CAAPGGK), D277, D303, and D322 each bind S-adenosyl-L-methionine. Residue C375 is the Nucleophile of the active site.

This sequence belongs to the class I-like SAM-binding methyltransferase superfamily. RsmB/NOP family.

The protein localises to the cytoplasm. The enzyme catalyses cytidine(967) in 16S rRNA + S-adenosyl-L-methionine = 5-methylcytidine(967) in 16S rRNA + S-adenosyl-L-homocysteine + H(+). Specifically methylates the cytosine at position 967 (m5C967) of 16S rRNA. The sequence is that of Ribosomal RNA small subunit methyltransferase B from Shigella flexneri.